Here is a 460-residue protein sequence, read N- to C-terminus: Cysteine--tRNA ligase (460 aa).

Cys-29 provides a ligand contact to Zn(2+). The 'HIGH' region signature appears at 31–41; it reads MTVYDYMHIGH. Zn(2+) is bound by residues Cys-210, His-235, and Glu-239. The 'KMSKS' region motif lies at 267-271; the sequence is KMSKS. Lys-270 is a binding site for ATP.

It belongs to the class-I aminoacyl-tRNA synthetase family. In terms of assembly, monomer. Zn(2+) serves as cofactor.

It is found in the cytoplasm. It catalyses the reaction tRNA(Cys) + L-cysteine + ATP = L-cysteinyl-tRNA(Cys) + AMP + diphosphate. The protein is Cysteine--tRNA ligase of Coxiella burnetii (strain RSA 493 / Nine Mile phase I).